The sequence spans 306 residues: 2-dehydro-3-deoxy-D-gluconate/2-dehydro-3-deoxy-phosphogluconate aldolase (306 aa).

Residues 61 to 62 (TT), 148 to 150 (YNY), and 173 to 175 (KDT) each bind substrate. K173 acts as the Schiff-base intermediate with substrate in catalysis.

It belongs to the DapA family. KDPG aldolase subfamily. Homotetramer; dimer of dimers.

The enzyme catalyses 2-dehydro-3-deoxy-6-phospho-D-gluconate = D-glyceraldehyde 3-phosphate + pyruvate. It catalyses the reaction 2-dehydro-3-deoxy-D-gluconate = D-glyceraldehyde + pyruvate. It functions in the pathway carbohydrate acid metabolism; 2-dehydro-3-deoxy-D-gluconate degradation; D-glyceraldehyde 3-phosphate and pyruvate from 2-dehydro-3-deoxy-D-gluconate: step 2/2. Functionally, involved in the degradation of glucose via the Entner-Doudoroff pathway. Catalyzes the reversible cleavage of 2-keto-3-deoxy-6-phosphogluconate (KDPG) and 2-keto-3-deoxygluconate (KDG) forming pyruvate and glyceraldehyde 3-phosphate or glyceraldehyde, respectively. It is not able to use 2-keto-3-deoxy-6-phosphogalactonate (KDPGal) and 2-keto-3-deoxygalactonate (KDGal) as substrate. This is 2-dehydro-3-deoxy-D-gluconate/2-dehydro-3-deoxy-phosphogluconate aldolase (kdgA) from Thermoproteus tenax.